A 171-amino-acid polypeptide reads, in one-letter code: ATP synthase subunit b (171 aa).

A helical transmembrane segment spans residues 2-22 (FVVKMVLGFLILLSPLCATGL).

This sequence belongs to the ATPase B chain family. As to quaternary structure, F-type ATPases have 2 components, F(1) - the catalytic core - and F(0) - the membrane proton channel. F(1) has five subunits: alpha(3), beta(3), gamma(1), delta(1), epsilon(1). F(0) has three main subunits: a(1), b(2) and c(10-14). The alpha and beta chains form an alternating ring which encloses part of the gamma chain. F(1) is attached to F(0) by a central stalk formed by the gamma and epsilon chains, while a peripheral stalk is formed by the delta and b chains.

The protein resides in the cell inner membrane. Its function is as follows. F(1)F(0) ATP synthase produces ATP from ADP in the presence of a proton or sodium gradient. F-type ATPases consist of two structural domains, F(1) containing the extramembraneous catalytic core and F(0) containing the membrane proton channel, linked together by a central stalk and a peripheral stalk. During catalysis, ATP synthesis in the catalytic domain of F(1) is coupled via a rotary mechanism of the central stalk subunits to proton translocation. In terms of biological role, component of the F(0) channel, it forms part of the peripheral stalk, linking F(1) to F(0). This Helicobacter pylori (strain G27) protein is ATP synthase subunit b.